The primary structure comprises 114 residues: ATP synthase epsilon chain (114 aa).

The protein belongs to the ATPase epsilon chain family. As to quaternary structure, F-type ATPases have 2 components, CF(1) - the catalytic core - and CF(0) - the membrane proton channel. CF(1) has five subunits: alpha(3), beta(3), gamma(1), delta(1), epsilon(1). CF(0) has three main subunits: a, b and c.

It localises to the cell membrane. Functionally, produces ATP from ADP in the presence of a proton gradient across the membrane. The chain is ATP synthase epsilon chain from Wolbachia pipientis wMel.